A 113-amino-acid polypeptide reads, in one-letter code: UPF0321 protein C569.02c (113 aa).

Residues 1 to 17 (MLLLFCICCAFIKLVLA) form the signal peptide. 3 N-linked (GlcNAc...) asparagine glycosylation sites follow: Asn-20, Asn-39, and Asn-65.

The protein belongs to the UPF0321 family.

This is UPF0321 protein C569.02c from Schizosaccharomyces pombe (strain 972 / ATCC 24843) (Fission yeast).